The following is a 416-amino-acid chain: NADH-quinone oxidoreductase subunit D (416 aa).

Belongs to the complex I 49 kDa subunit family. In terms of assembly, NDH-1 is composed of 14 different subunits. Subunits NuoB, C, D, E, F, and G constitute the peripheral sector of the complex.

It is found in the cell inner membrane. It carries out the reaction a quinone + NADH + 5 H(+)(in) = a quinol + NAD(+) + 4 H(+)(out). NDH-1 shuttles electrons from NADH, via FMN and iron-sulfur (Fe-S) centers, to quinones in the respiratory chain. The immediate electron acceptor for the enzyme in this species is believed to be ubiquinone. Couples the redox reaction to proton translocation (for every two electrons transferred, four hydrogen ions are translocated across the cytoplasmic membrane), and thus conserves the redox energy in a proton gradient. In Caulobacter sp. (strain K31), this protein is NADH-quinone oxidoreductase subunit D.